We begin with the raw amino-acid sequence, 71 residues long: MGASPVQLLIVLFIAVLVFGGKRLRTLGSDVGAAIKGFKEAMKEEPTEPEKLEQQPPVIEVVATQKEKTKG.

A helical membrane pass occupies residues 1 to 21 (MGASPVQLLIVLFIAVLVFGG).

It belongs to the TatA/E family. As to quaternary structure, the Tat system comprises two distinct complexes: a TatABC complex, containing multiple copies of TatA, TatB and TatC subunits, and a separate TatA complex, containing only TatA subunits. Substrates initially bind to the TatABC complex, which probably triggers association of the separate TatA complex to form the active translocon.

It is found in the cell inner membrane. Functionally, part of the twin-arginine translocation (Tat) system that transports large folded proteins containing a characteristic twin-arginine motif in their signal peptide across membranes. TatA could form the protein-conducting channel of the Tat system. This Dichelobacter nodosus (strain VCS1703A) protein is Sec-independent protein translocase protein TatA.